A 337-amino-acid polypeptide reads, in one-letter code: Serpentine receptor class alpha-17 (337 aa).

A run of 6 helical transmembrane segments spans residues 28-48, 110-130, 155-175, 197-217, 247-267, and 282-302; these read LNFV…GLAI, ELYF…SLTF, IIQL…VPLV, FRTA…YLSV, CILI…VNYI, and IAPF…VIYF.

The protein belongs to the nematode receptor-like protein sra family.

The protein resides in the membrane. This is Serpentine receptor class alpha-17 (sra-17) from Caenorhabditis elegans.